We begin with the raw amino-acid sequence, 352 residues long: Phosphate acyltransferase (352 aa).

The protein belongs to the PlsX family. Homodimer. Probably interacts with PlsY.

It is found in the cytoplasm. The enzyme catalyses a fatty acyl-[ACP] + phosphate = an acyl phosphate + holo-[ACP]. It participates in lipid metabolism; phospholipid metabolism. In terms of biological role, catalyzes the reversible formation of acyl-phosphate (acyl-PO(4)) from acyl-[acyl-carrier-protein] (acyl-ACP). This enzyme utilizes acyl-ACP as fatty acyl donor, but not acyl-CoA. The chain is Phosphate acyltransferase from Brucella anthropi (strain ATCC 49188 / DSM 6882 / CCUG 24695 / JCM 21032 / LMG 3331 / NBRC 15819 / NCTC 12168 / Alc 37) (Ochrobactrum anthropi).